The following is a 953-amino-acid chain: Vacuolar membrane protease (953 aa).

The Cytoplasmic portion of the chain corresponds to 1-16 (MDQTKPPRRNPLAFTP). Residues 17–37 (WPVTLITAVVYLAFVIPLLVI) form a helical membrane-spanning segment. The Vacuolar segment spans residues 38-382 (HHVVPSAPTS…TFVLFRLHTL (345 aa)). Asn53 and Asn115 each carry an N-linked (GlcNAc...) asparagine glycan. Zn(2+) is bound by residues His165 and Asp177. Glu211 serves as the catalytic Proton acceptor. Residues Glu212, Glu237, and His310 each contribute to the Zn(2+) site. A helical transmembrane segment spans residues 383–403 (FALSVTLLVVAPIVLLLTSII). Over 404–437 (LTKVDKMYLFRTSIRPEGSLEVLPLYGDRGVIRY) the chain is Cytoplasmic. A helical membrane pass occupies residues 438-458 (PFLLGIPTAVTIGLAYLLTKF). At 459–464 (NPYIVH) the chain is on the vacuolar side. A helical transmembrane segment spans residues 465 to 485 (SSQYAVWSMMVSVWIFLAWFV). Residues 486–499 (SRVADFARPSAFHR) are Cytoplasmic-facing. The helical transmembrane segment at 500 to 520 (VYTLTWTFVVMWVLQVIATVY) threads the bilayer. Residues 521-524 (QDRW) lie on the Vacuolar side of the membrane. A helical transmembrane segment spans residues 525-545 (ALGGSYFIFFAYAGTFLATWI). The Cytoplasmic portion of the chain corresponds to 546 to 650 (SYLELFALPR…SLPKWLWLLQ (105 aa)). The tract at residues 570–599 (ASSHSSRRGLSEEDEEDEDEAPTESTSLLG) is disordered. Residues 581-591 (EEDEEDEDEAP) are compositionally biased toward acidic residues. A helical transmembrane segment spans residues 651 to 671 (FLLAAPIVLILVGPIALLLTG). Over 672-684 (SLHQTGQDGSSSL) the chain is Vacuolar. Residues 685–705 (FIYIAIVALTTLLLSPMLPFV) traverse the membrane as a helical segment. Residues 706–711 (HRCTYH) are Cytoplasmic-facing. A helical membrane pass occupies residues 712 to 732 (IPLFMLAVFAGTLIYNLVAFP). Topologically, residues 733-953 (FSDSNRLKLF…VEGRKSFEIA (221 aa)) are vacuolar. A glycan (N-linked (GlcNAc...) asparagine) is linked at Asn779.

It belongs to the peptidase M28 family. Zn(2+) serves as cofactor.

Its subcellular location is the vacuole membrane. Its function is as follows. May be involved in vacuolar sorting and osmoregulation. In Emericella nidulans (strain FGSC A4 / ATCC 38163 / CBS 112.46 / NRRL 194 / M139) (Aspergillus nidulans), this protein is Vacuolar membrane protease.